We begin with the raw amino-acid sequence, 495 residues long: Fibronectin type III and SPRY domain-containing protein 1 (495 aa).

Residues 4-99 (QKESLRKIIT…ALESSEELLE (96 aa)) adopt a coiled-coil conformation. In terms of domain architecture, COS spans 105–162 (LCSSENDSFTQAAKDIKDSVTMAPAFRLSLKAKASDSMNHMMVDFTHERNLLQSITFL). Residues 164–268 (VPATPEIHVA…EPVTLETHAF (105 aa)) enclose the Fibronectin type-III domain. In terms of domain architecture, B30.2/SPRY spans 281-476 (LKVEDLSVEW…VQTGLQVPSI (196 aa)). A disordered region spans residues 306–332 (KNRTNSPMHSPARTAMMSPKRAPSARV). S490 bears the Phosphoserine mark.

As to quaternary structure, oligomerization is required for binding to microtubules.

The protein localises to the cytoplasm. It is found in the cytoskeleton. The protein resides in the microtubule organizing center. Its subcellular location is the centrosome. It localises to the nucleus. The protein localises to the cleavage furrow. May be involved in microtubule organization and stabilization. This Danio rerio (Zebrafish) protein is Fibronectin type III and SPRY domain-containing protein 1 (fsd1).